The primary structure comprises 588 residues: MQTPKRRRGAQGCPRSSPSPPLLLLVGAVWFCAALSVAAGSFELTILHTNDVHARVEQTSRDSGKCTGQDCYGGVARRATKIRELRANHSHVLLLDAGDQYQGTIWFSFFKGREVVKFMNSLGYDAMALGNHEFDNGLAGLLDPLLKHANFPILSANIRPKGSIASNISGYILPYKIINVGSEKVGIIGYTTKETPVLSNPGPYLEFRDEVEELQKHANKLTTLGVNKIIALGHSGFFEDQRIARKVKGVDVVVGGHTNTFLYTGSPPSTEVAAGNYPFMVKSDDGRQVPVVQAYAFGKYLGYLNVIFDDKGNVIKSSGNPILLNKNISEDQDVKAEVNKMKIQLHNYSSQEIGKTIVYLNGTTQACRFHECNLGNLICDAVIYNNVRHPDYNEWNHVSMCIVNGGGIRSPIDERANNGTITLEELTAVLPFGGTFDLLQIKGCALKQAFEHSVHRHGQGMGELLQVSGIKVVYDLSRKPGSRVVSLNVLCTECRVPTYVPLEKEKTYKLLLPSFLAGGGDGYHMLKGDSSNHSSGNLDISIVGDYIKRMGKVFPAVEGRVIFSAGTLFQAQLFLTWGLCISLLYFIL.

The signal sequence occupies residues 1-40 (MQTPKRRRGAQGCPRSSPSPPLLLLVGAVWFCAALSVAAG). The Zn(2+) site is built by Asp-51 and His-53. Cysteines 66 and 71 form a disulfide. Asn-88 carries an N-linked (GlcNAc...) asparagine glycan. Positions 99 and 131 each coordinate Zn(2+). An N-linked (GlcNAc...) asparagine glycan is attached at Asn-167. Zn(2+) contacts are provided by His-234 and His-257. N-linked (GlcNAc...) asparagine glycans are attached at residues Asn-327, Asn-347, and Asn-361. 2 disulfides stabilise this stretch: Cys-367/Cys-372 and Cys-379/Cys-401. Position 368 (Arg-368) interacts with AMP. 2 residues coordinate AMP: Asn-404 and Arg-409. A glycan (N-linked (GlcNAc...) asparagine) is linked at Asn-418. Residue Phe-432 participates in AMP binding. An intrachain disulfide couples Cys-491 to Cys-494. Phe-515 and Asp-521 together coordinate AMP. A glycan (N-linked (GlcNAc...) asparagine) is linked at Asn-532. Ser-564 carries GPI-anchor amidated serine lipidation. Residues 565–588 (AGTLFQAQLFLTWGLCISLLYFIL) constitute a propeptide, removed in mature form.

It belongs to the 5'-nucleotidase family. It depends on Zn(2+) as a cofactor. Post-translationally, venom 5'-nucleotidases (or a part thereof) may be released into the venom via exosome-like vesicles. They may be attached via a GPI anchor to the membrane of these vesicles. Soluble forms of 5'-nucleotidase might be released by cleavage of the ectodomain in the exosome-like vesicles or venom gland cells. As to expression, expressed by the venom gland.

The protein localises to the membrane. The catalysed reaction is a ribonucleoside 5'-phosphate + H2O = a ribonucleoside + phosphate. Its function is as follows. Hydrolyzes nucleotides into nucleosides. Snake venom 5'-nucleotidases are widely distributed among venomous snake taxa, but there is a lack of information about their biological activities. They have been shown to inhibit platelet aggregation. This effect may be due to the liberation of inhibitory AMP or adenosine by its action on ADP released upon initiation of aggregation. Venom 5'-nucleotidases are also known to synergistically act in vivo with other toxins like ADPases, phospholipases, and disintegrins to exert a more pronounced anti-coagulant effect. The polypeptide is Snake venom 5'-nucleotidase (Gloydius brevicauda (Korean slamosa snake)).